We begin with the raw amino-acid sequence, 355 residues long: UDP-N-acetylglucosamine--N-acetylmuramyl-(pentapeptide) pyrophosphoryl-undecaprenol N-acetylglucosamine transferase (355 aa).

Residues 15–17 (TGG), Asn127, Arg163, Ser191, Ile244, 263–268 (ALTVSE), and Gln288 each bind UDP-N-acetyl-alpha-D-glucosamine.

The protein belongs to the glycosyltransferase 28 family. MurG subfamily.

The protein localises to the cell inner membrane. The enzyme catalyses di-trans,octa-cis-undecaprenyl diphospho-N-acetyl-alpha-D-muramoyl-L-alanyl-D-glutamyl-meso-2,6-diaminopimeloyl-D-alanyl-D-alanine + UDP-N-acetyl-alpha-D-glucosamine = di-trans,octa-cis-undecaprenyl diphospho-[N-acetyl-alpha-D-glucosaminyl-(1-&gt;4)]-N-acetyl-alpha-D-muramoyl-L-alanyl-D-glutamyl-meso-2,6-diaminopimeloyl-D-alanyl-D-alanine + UDP + H(+). It participates in cell wall biogenesis; peptidoglycan biosynthesis. Its function is as follows. Cell wall formation. Catalyzes the transfer of a GlcNAc subunit on undecaprenyl-pyrophosphoryl-MurNAc-pentapeptide (lipid intermediate I) to form undecaprenyl-pyrophosphoryl-MurNAc-(pentapeptide)GlcNAc (lipid intermediate II). The chain is UDP-N-acetylglucosamine--N-acetylmuramyl-(pentapeptide) pyrophosphoryl-undecaprenol N-acetylglucosamine transferase from Salmonella typhi.